Reading from the N-terminus, the 276-residue chain is Acyl-[acyl-carrier-protein]--UDP-N-acetylglucosamine O-acyltransferase (276 aa).

This sequence belongs to the transferase hexapeptide repeat family. LpxA subfamily. As to quaternary structure, homotrimer.

It is found in the cytoplasm. It catalyses the reaction a (3R)-hydroxyacyl-[ACP] + UDP-N-acetyl-alpha-D-glucosamine = a UDP-3-O-[(3R)-3-hydroxyacyl]-N-acetyl-alpha-D-glucosamine + holo-[ACP]. The protein operates within glycolipid biosynthesis; lipid IV(A) biosynthesis; lipid IV(A) from (3R)-3-hydroxytetradecanoyl-[acyl-carrier-protein] and UDP-N-acetyl-alpha-D-glucosamine: step 1/6. In terms of biological role, involved in the biosynthesis of lipid A, a phosphorylated glycolipid that anchors the lipopolysaccharide to the outer membrane of the cell. The protein is Acyl-[acyl-carrier-protein]--UDP-N-acetylglucosamine O-acyltransferase of Synechocystis sp. (strain ATCC 27184 / PCC 6803 / Kazusa).